Consider the following 892-residue polypeptide: Ice-binding protein 1 (892 aa).

An N-terminal signal peptide occupies residues 1–23 (MNHSIKKTYLVFTMLLGFILLAG). C24 carries the N-palmitoyl cysteine lipid modification. Residue C24 is the site of S-diacylglycerol cysteine attachment. BIG2 domains are found at residues 43–111 (TSIA…ITAS), 134–205 (TALA…SLGS), 221–288 (SIAL…ITAD), 306–386 (TSIM…TVTV), 392–471 (TSIA…TNLT), 478–558 (NSIV…NLTV), and 565–638 (SIDV…QASL). The Ice-binding site motif (T-A/G-X-T/N) signature appears at 866-869 (TGAN).

The protein belongs to the ice-binding protein family.

The protein resides in the cell outer membrane. Functionally, ice-binding adhesion protein that adsorbs this bacterium onto ice to maintain a favorable position in its aquatic habitat. Inhibits growth of the ice crystals. Has high thermal hysteresis (TH) activity, which is the ability to lower the freezing point of an aqueous solution below its melting point. The TH activity of this protein is approximately 1.4 degrees Celsius at 25 uM and little below 2 degrees Celsius at 80 uM. This is Ice-binding protein 1 from Shewanella frigidimarina (strain NCIMB 400).